Consider the following 59-residue polypeptide: Small ribosomal subunit protein bS21 (59 aa).

This sequence belongs to the bacterial ribosomal protein bS21 family.

The sequence is that of Small ribosomal subunit protein bS21 from Acholeplasma laidlawii (strain PG-8A).